The following is a 464-amino-acid chain: L-cystine uptake protein TcyP (464 aa).

10 consecutive transmembrane segments (helical) span residues Thr-3 to Met-23, Val-34 to Pro-54, Tyr-73 to Phe-93, Gly-107 to Ala-127, Pro-184 to Val-204, Ile-225 to Met-245, Phe-263 to Ala-283, Ala-347 to Leu-367, Phe-371 to Gly-391, and Phe-395 to Ile-415.

Belongs to the dicarboxylate/amino acid:cation symporter (DAACS) (TC 2.A.23) family.

It is found in the membrane. Its function is as follows. Mediates uptake of L-cystine, the oxidized form of L-cysteine. The sequence is that of L-cystine uptake protein TcyP from Bacillus thuringiensis subsp. konkukian (strain 97-27).